The sequence spans 163 residues: MAFDYVRAAKYFVLWDFIKGFALGMKYFVAPKPTLNYPHEKGPLSPRFRGEHALRRYPSGEERCIACKLCEAICPAQAITIDAEPRDDGSRRTTRYDIDMTKCIYCGYCQEACPVDAIVEGPNFEYATETREELFYTKEKLLENGARWEAEIARNIEMDAPYR.

4Fe-4S ferredoxin-type domains follow at residues 55–84 and 94–123; these read RRYP…IDAE and TRYD…EGPN. Cys-64, Cys-67, Cys-70, Cys-74, Cys-103, Cys-106, Cys-109, and Cys-113 together coordinate [4Fe-4S] cluster.

It belongs to the complex I 23 kDa subunit family. NDH-1 is composed of 14 different subunits. Subunits NuoA, H, J, K, L, M, N constitute the membrane sector of the complex. [4Fe-4S] cluster serves as cofactor.

Its subcellular location is the cell inner membrane. It catalyses the reaction a quinone + NADH + 5 H(+)(in) = a quinol + NAD(+) + 4 H(+)(out). NDH-1 shuttles electrons from NADH, via FMN and iron-sulfur (Fe-S) centers, to quinones in the respiratory chain. The immediate electron acceptor for the enzyme in this species is believed to be ubiquinone. Couples the redox reaction to proton translocation (for every two electrons transferred, four hydrogen ions are translocated across the cytoplasmic membrane), and thus conserves the redox energy in a proton gradient. The sequence is that of NADH-quinone oxidoreductase subunit I (nuoI) from Rhodobacter capsulatus (Rhodopseudomonas capsulata).